The sequence spans 260 residues: Indole-3-glycerol phosphate synthase (260 aa).

This sequence belongs to the TrpC family.

The catalysed reaction is 1-(2-carboxyphenylamino)-1-deoxy-D-ribulose 5-phosphate + H(+) = (1S,2R)-1-C-(indol-3-yl)glycerol 3-phosphate + CO2 + H2O. It participates in amino-acid biosynthesis; L-tryptophan biosynthesis; L-tryptophan from chorismate: step 4/5. The polypeptide is Indole-3-glycerol phosphate synthase (Desulfotalea psychrophila (strain LSv54 / DSM 12343)).